The chain runs to 332 residues: RNA polymerase principal sigma factor HrdD (332 aa).

The tract at residues 1-21 is disordered; that stretch reads MATRAVARRQPAASGETGAAG. Residues 124–137 carry the Polymerase core binding motif; it reads DLIQEGNAGLVRAV. A DNA-binding region (H-T-H motif) is located at residues 294–313; it reads LTEVGKQHGLTRERIRQIEK.

This sequence belongs to the sigma-70 factor family.

Functionally, sigma factors are initiation factors that promote the attachment of RNA polymerase to specific initiation sites and are then released. The chain is RNA polymerase principal sigma factor HrdD (hrdD) from Streptomyces griseus.